An 890-amino-acid polypeptide reads, in one-letter code: DNA mismatch repair protein MutS (890 aa).

Residue 607-614 (GPNMSGKS) coordinates ATP.

This sequence belongs to the DNA mismatch repair MutS family.

This protein is involved in the repair of mismatches in DNA. It is possible that it carries out the mismatch recognition step. This protein has a weak ATPase activity. This chain is DNA mismatch repair protein MutS, found in Bacillus mycoides (strain KBAB4) (Bacillus weihenstephanensis).